The following is a 68-amino-acid chain: Lantibiotic mersacidin (68 aa).

Positions 1 to 28 are disordered; sequence MSQEAIIRSWKDPFSRENSTQNPAGNPF. A propeptide spanning residues 1–48 is cleaved from the precursor; it reads MSQEAIIRSWKDPFSRENSTQNPAGNPFSELKEAQMDKLVGAGDMEAA. The segment at residues 49-50 is a cross-link (beta-methyllanthionine (Cys-Thr)); sequence CT. 2 consecutive cross-links (beta-methyllanthionine (Thr-Cys)) follow at residues 52–60 and 61–66; these read TLPGGGGVC and TLTSEC. A cross-link (S-(2-aminovinyl)-3-methyl-D-cysteine (Thr-Cys)) is located at residues 63–68; sequence TSECIC. 2,3-didehydroalanine (Ser) is present on Ser-64.

It belongs to the type B lantibiotic family. Post-translationally, maturation of lantibiotics involves the enzymatic conversion of Thr, and Ser into dehydrated AA and the formation of thioether bonds with cysteine. The carboxy-terminal beta-methyllanthionine undergoes decarboxylation. This is followed by membrane translocation and cleavage of the modified precursor.

In terms of biological role, kills a number of Gram-positive bacteria. Acts at the level of cell wall biosynthesis by interfering with bacterial peptidoglycan biosynthesis. Specifically inhibits the conversion of the lipid II intermediate into polymeric nascent glycan strands by transglycosylation. May interact with the peptidoglycan precursor rather than with the enzyme. The sequence is that of Lantibiotic mersacidin (mrsA) from Bacillus sp. (strain HIL-Y85/54728).